The primary structure comprises 102 residues: Small ribosomal subunit protein uS10 (102 aa).

The protein belongs to the universal ribosomal protein uS10 family. In terms of assembly, part of the 30S ribosomal subunit.

Functionally, involved in the binding of tRNA to the ribosomes. The polypeptide is Small ribosomal subunit protein uS10 (Methanoregula boonei (strain DSM 21154 / JCM 14090 / 6A8)).